A 99-amino-acid polypeptide reads, in one-letter code: Small integral membrane protein 14 (99 aa).

Topologically, residues 1–49 are lumenal; sequence MAEGGFDPCECVCSHEHAMRRLINLLRQSQSYCTDTECLQELPGPSGDN. Residues 50–70 traverse the membrane as a helical segment; it reads GISVTMILVAWMVIALILFLL. Residues 71 to 99 lie on the Cytoplasmic side of the membrane; the sequence is RPPNLRGSSLPGKPTSPHNGQDPPAPPVD. Residues 78–99 are disordered; that stretch reads SSLPGKPTSPHNGQDPPAPPVD.

Its subcellular location is the endoplasmic reticulum membrane. The polypeptide is Small integral membrane protein 14 (SMIM14) (Homo sapiens (Human)).